The chain runs to 126 residues: Glycine cleavage system H protein (126 aa).

One can recognise a Lipoyl-binding domain in the interval 24 to 105 (TLTVGITDHA…AYGVWLFKIK (82 aa)). An N6-lipoyllysine modification is found at K65.

The protein belongs to the GcvH family. In terms of assembly, the glycine cleavage system is composed of four proteins: P, T, L and H. The cofactor is (R)-lipoate.

The glycine cleavage system catalyzes the degradation of glycine. The H protein shuttles the methylamine group of glycine from the P protein to the T protein. In Burkholderia cenocepacia (strain ATCC BAA-245 / DSM 16553 / LMG 16656 / NCTC 13227 / J2315 / CF5610) (Burkholderia cepacia (strain J2315)), this protein is Glycine cleavage system H protein.